The following is an 898-amino-acid chain: Serine/threonine-protein kinase TAO3 (898 aa).

A Protein kinase domain is found at 24-277; sequence FIDLHEIGHG…AAELLRHDFI (254 aa). ATP-binding positions include 30-38 and Lys-53; that span reads IGHGSFGAV. Residue Asp-147 is the Proton acceptor of the active site. 2 disordered regions span residues 316-372 and 405-424; these read TRNG…EVMD and DEAGHGDPRPEPRPTQSVQS. Phosphoserine occurs at positions 324, 331, 343, 346, and 349. The segment covering 349-366 has biased composition (low complexity); sequence SIPSVSVSTGSRSSSVNS. A Phosphothreonine modification is found at Thr-357. Position 359 is a phosphoserine (Ser-359). Basic and acidic residues predominate over residues 405-416; that stretch reads DEAGHGDPRPEP. At Ser-442 the chain carries Phosphoserine. Coiled coils occupy residues 452–502, 548–649, and 753–871; these read EQEN…THAN, FLES…HAML, and ILKT…QERE. The tract at residues 565 to 596 is disordered; that stretch reads EEMNEDHSTPKKEKQERISKHKENLQHTQAEE. Lys-830 carries the post-translational modification N6-acetyllysine.

The protein belongs to the protein kinase superfamily. STE Ser/Thr protein kinase family. STE20 subfamily. As to quaternary structure, self-associates. Interacts with ERN1 and TRAF2. Interaction with TRAF2 is facilitated under ER stress conditions, such as treatment with tunicamycin, and may promote TRAF2 phosphorylation. Interacts (via N-terminus) with STK25; the interaction promotes STK25 abundance at the level of protein expression and/or stability. In terms of processing, autophosphorylated. Phosphorylation at Ser-324 by ATM following DNA damage is required for activation of the p38/MAPK14 stress-activated MAPK cascade. Phosphorylated at Ser-324 and on Tyr residues during T cell activation. Phosphorylated by LRRK2. As to expression, ubiquitously expressed, with a higher expression in the retina.

Its subcellular location is the cytoplasm. It localises to the cell membrane. It is found in the membrane raft. The protein localises to the lipid droplet. It catalyses the reaction L-seryl-[protein] + ATP = O-phospho-L-seryl-[protein] + ADP + H(+). The catalysed reaction is L-threonyl-[protein] + ATP = O-phospho-L-threonyl-[protein] + ADP + H(+). Functionally, serine/threonine-protein kinase that acts as a regulator of the p38/MAPK14 stress-activated MAPK cascade and of the MAPK8/JNK cascade. In response to DNA damage, involved in the G2/M transition DNA damage checkpoint by activating the p38/MAPK14 stress-activated MAPK cascade, probably by mediating phosphorylation of upstream MAP2K3 and MAP2K6 kinases. Inhibits basal activity of the MAPK8/JNK cascade and diminishes its activation in response to epidermal growth factor (EGF). Positively regulates canonical T cell receptor (TCR) signaling by preventing early PTPN6/SHP1-mediated inactivation of LCK, ensuring sustained TCR signaling that is required for optimal activation and differentiation of T cells. Phosphorylates PTPN6/SHP1 on 'Thr-396', leading to its polyubiquitination and subsequent proteasomal degradation. Required for cell surface expression of metalloprotease ADAM10 on type 1 transitional B cells which is necessary for their NOTCH-mediated development into marginal zone B cells. Also required for the NOTCH-mediated terminal differentiation of splenic conventional type 2 dendritic cells. Positively regulates osteoblast differentiation by acting as an upstream activator of the JNK pathway. Promotes JNK signaling in hepatocytes and positively regulates hepatocyte lipid storage by inhibiting beta-oxidation and triacylglycerol secretion while enhancing lipid synthesis. Restricts age-associated inflammation by negatively regulating differentiation of macrophages and their production of pro-inflammatory cytokines. Plays a role in negatively regulating the abundance of regulatory T cells in white adipose tissue. In Rattus norvegicus (Rat), this protein is Serine/threonine-protein kinase TAO3 (Taok3).